The chain runs to 475 residues: Chromosomal replication initiator protein DnaA (475 aa).

The segment at 1–73 (MSDTEQERWS…LSCWQAELPD (73 aa)) is domain I, interacts with DnaA modulators. Residues 73 to 131 (DVHRIDLTVRSAMRCAAPVREAPATDARHPERSEGRNGVELKTVATAPASANHDALGGS) form a domain II region. The tract at residues 132-354 (PLDPRLTFQS…GAINRLLAHS (223 aa)) is domain III, AAA+ region. Gly179, Gly181, Lys182, and Thr183 together coordinate ATP. The interval 355–475 (KLNAQPVTLE…VELLKRQLQE (121 aa)) is domain IV, binds dsDNA.

This sequence belongs to the DnaA family. In terms of assembly, oligomerizes as a right-handed, spiral filament on DNA at oriC.

The protein localises to the cytoplasm. Plays an essential role in the initiation and regulation of chromosomal replication. ATP-DnaA binds to the origin of replication (oriC) to initiate formation of the DNA replication initiation complex once per cell cycle. Binds the DnaA box (a 9 base pair repeat at the origin) and separates the double-stranded (ds)DNA. Forms a right-handed helical filament on oriC DNA; dsDNA binds to the exterior of the filament while single-stranded (ss)DNA is stabiized in the filament's interior. The ATP-DnaA-oriC complex binds and stabilizes one strand of the AT-rich DNA unwinding element (DUE), permitting loading of DNA polymerase. After initiation quickly degrades to an ADP-DnaA complex that is not apt for DNA replication. Binds acidic phospholipids. This Nitrobacter winogradskyi (strain ATCC 25391 / DSM 10237 / CIP 104748 / NCIMB 11846 / Nb-255) protein is Chromosomal replication initiator protein DnaA.